Here is an 847-residue protein sequence, read N- to C-terminus: Guanine nucleotide exchange factor VAV3 (847 aa).

The Calponin-homology (CH) domain maps to 1-119; that stretch reads MEPWKQCAQW…ETLSRLSRTP (119 aa). Y141 is subject to Phosphotyrosine. Residues 192-371 form the DH domain; sequence IRSCCLAEIR…KDLAQYVNEV (180 aa). A PH domain is found at 400–502; that stretch reads RPQGDGEIRI…WLEQFEMALS (103 aa). The Phorbol-ester/DAG-type zinc-finger motif lies at 513–562; the sequence is FHDFKMHTFTRVTSCRVCQMLLRGTFYQGYLCFKCGAKAHKECLGRVDNC. The segment at 560 to 847 is sufficient for interaction with ROS1; the sequence is DNCGRVNSVE…FPSTYVEEDE (288 aa). One can recognise an SH3 1 domain in the interval 592 to 660; sequence PGLPKMQVIR…PSDAVKPSPC (69 aa). The 95-residue stretch at 672 to 766 folds into the SH2 domain; it reads WYAGPMERLQ…TLDTTLQFPY (95 aa). One can recognise an SH3 2 domain in the interval 788–847; it reads KVLGIAIARYDFCARDMRELSLLKGDMVKIYTKMSANGWWRGEVNGRVGWFPSTYVEEDE.

Interacts with the PH domain of APS. Interacts with ROS1; constitutive interaction that mediates VAV3 phosphorylation. Interacts (via SH2 domains) with the phosphorylated form of EPHA2. Phosphorylated. Phosphorylation can be mediated by ROS1. In osteoclasts, undergoes tyrosine phosphorylation in response to CSF1. Abundantly expressed in osteoclasts and mature osteoblasts. Also expressed in bone marrow macrophages (at protein level):.

Functionally, exchange factor for GTP-binding proteins RhoA, RhoG and, to a lesser extent, Rac1. Binds physically to the nucleotide-free states of those GTPases. Plays an important role in angiogenesis. Its recruitment by phosphorylated EPHA2 is critical for EFNA1-induced RAC1 GTPase activation and vascular endothelial cell migration and assembly. May be important for integrin-mediated signaling, at least in some cell types. In osteoclasts, along with SYK tyrosine kinase, required for signaling through integrin alpha-v/beta-1 (ITAGV-ITGB1), a crucial event for osteoclast proper cytoskeleton organization and function. This signaling pathway involves RAC1, but not RHO, activation. Necessary for proper wound healing. In the course of wound healing, required for the phagocytotic cup formation preceding macrophage phagocytosis of apoptotic neutrophils. Responsible for integrin beta-2-mediated macrophage adhesion and, to a lesser extent, contributes to beta-3-mediated adhesion. Does not affect integrin beta-1-mediated adhesion. The sequence is that of Guanine nucleotide exchange factor VAV3 (Vav3) from Mus musculus (Mouse).